A 536-amino-acid polypeptide reads, in one-letter code: MGNPTLMRWPVTRILVLGLVVTVLYKAMAIYSSRRAPVQVCFTSPSSAFKIKHIFHNAADGRTHKRLDIDDEFLSIYNSARSQMAHIEDMDLFTVSPFEQELVIRHTEGQTVRLADRSPDFVESYLDYALENGPASRMIEFDWQQESLLIPNMSDKETIVSLALMSSDAYVGLPTDADWNDVGDKYNESERFGWENGGVRGHVFTDPEETIVIISIKGTSAAGLNTGGDGQTVEQDKTNDNLLFSCCCARVSSLWKTVCDCYEESYTCNQNCLEQELRRPDRYYKAVLEIYRNVTHMYPESEIWVTGHSLGGSLSSLLGRTFGLPAVSFEAVGELLATRRLHLPMPPGLPEEMENIWHVGNTADPIFMGVCNGASSTCSLAGYALETQCHSGKKCVYDVVNDLGWHVNLLNHRIRTIISDVLMVYNDTAECVKPPPCYDCYNWRFVDHSGDRYRTTASSPSPIPSDPPGRRCLKRTWYGRCYEWADDPSAVKTTFATSTIYRKTSDISTSTHTGGNTTCIRRSWLGYCLEYGPELR.

Residues 1–8 (MGNPTLMR) lie on the Cytoplasmic side of the membrane. Residues 9 to 31 (WPVTRILVLGLVVTVLYKAMAIY) form a helical; Signal-anchor for type II membrane protein membrane-spanning segment. The Lumenal portion of the chain corresponds to 32 to 536 (SSRRAPVQVC…YCLEYGPELR (505 aa)). N-linked (GlcNAc...) asparagine glycosylation is found at Asn152, Asn187, and Asn293. The Charge relay system role is filled by Ser309. N-linked (GlcNAc...) asparagine glycosylation is found at Asn426 and Asn516.

It belongs to the AB hydrolase superfamily. Lipase family. Binds to both phosphatidylinositol (PI) and phosphatidylinositol 3,5-bisphosphate (PIP2).

The protein localises to the endosome. The protein resides in the multivesicular body membrane. It localises to the prevacuolar compartment membrane. The catalysed reaction is a triacylglycerol + H2O = a diacylglycerol + a fatty acid + H(+). In terms of biological role, lipase which is essential for lysis of subvacuolar cytoplasm to vacuole targeted bodies and intravacuolar autophagic bodies. Involved in the lysis of intravacuolar multivesicular body (MVB) vesicles. The intravacuolar membrane disintegration by ATG15 is critical to life span extension. The chain is Putative lipase ATG15 (ATG15) from Pichia angusta (Yeast).